Here is an 86-residue protein sequence, read N- to C-terminus: F(1)-ATPase inhibitor STF1, mitochondrial (86 aa).

A mitochondrion-targeting transit peptide spans 1-23 (MLNRCISRNTRLPVNLRIASRFY). Ser24 bears the Phosphoserine mark.

This sequence belongs to the ATPase inhibitor family. As to quaternary structure, monomer and homodimer. Monomeric at pH 5.0 and dimeric at either pH 6.5 or 8.0. The protein aggregates increasingly strongly with increasing pH.

The protein localises to the mitochondrion. Its function is as follows. Endogenous low-affinity ATPase inhibitor, which inhibits specifically the reverse ATPase reaction of mitochondrial F(1)F(0)-type ATP synthase. Found to stabilize, together with STF2, a complex of intrinsic ATPase inhibitor INH1 and proton-translocating ATPase in mitochondrial membranes. Binds directly to purified F1-ATPase. This Saccharomyces cerevisiae (strain ATCC 204508 / S288c) (Baker's yeast) protein is F(1)-ATPase inhibitor STF1, mitochondrial (STF1).